We begin with the raw amino-acid sequence, 133 residues long: Fatty acid-binding protein, heart (133 aa).

The residue at position 2 (Ala-2) is an N-acetylalanine. Thr-8 carries the phosphothreonine modification. Tyr-20 carries the phosphotyrosine; by Tyr-kinases modification. Ser-23 bears the Phosphoserine mark. A Phosphothreonine modification is found at Thr-30. Ser-83 carries the post-translational modification Phosphoserine. (9Z)-octadecenoate is bound at residue 127–129 (RTY). 127 to 129 (RTY) is a hexadecanoate binding site. 127 to 129 (RTY) contributes to the octadecanoate binding site.

Heart, but also skeletal muscle, kidney, brain and mammary gland.

It is found in the cytoplasm. Its function is as follows. FABPs are thought to play a role in the intracellular transport of long-chain fatty acids and their acyl-CoA esters. This chain is Fatty acid-binding protein, heart (Fabp3), found in Rattus norvegicus (Rat).